The following is a 232-amino-acid chain: Large ribosomal subunit protein uL1 (232 aa).

Belongs to the universal ribosomal protein uL1 family. Part of the 50S ribosomal subunit.

In terms of biological role, binds directly to 23S rRNA. The L1 stalk is quite mobile in the ribosome, and is involved in E site tRNA release. Protein L1 is also a translational repressor protein, it controls the translation of the L11 operon by binding to its mRNA. This chain is Large ribosomal subunit protein uL1, found in Burkholderia mallei (strain NCTC 10247).